The chain runs to 370 residues: ADP-ribosylhydrolase ARH3 (370 aa).

A Mg(2+)-binding site is contributed by Glu-47. At Thr-70 the chain carries Phosphothreonine. 3 residues coordinate Mg(2+): Thr-82, Asp-83, and Asp-84. Asp-83 is a binding site for substrate. Substrate is bound by residues 152–158 (KGSYGNG), His-188, Leu-241, and Ile-277. Residues Asp-320, Asp-322, and Thr-323 each coordinate Mg(2+).

It belongs to the ADP-ribosylglycohydrolase family. In terms of assembly, monomer. Mg(2+) serves as cofactor. As to expression, ubiquitous.

It is found in the nucleus. The protein localises to the cytoplasm. It localises to the chromosome. Its subcellular location is the mitochondrion matrix. The enzyme catalyses [(1''-&gt;2')-ADP-alpha-D-ribose](n) + H2O = [(1''-&gt;2')-ADP-alpha-D-ribose](n-1) + ADP-D-ribose. The catalysed reaction is 1''-O-acetyl-ADP-alpha-D-ribose + H2O = ADP-D-ribose + acetate + H(+). It carries out the reaction O-(ADP-D-ribosyl)-L-seryl-[protein] + H2O = ADP-D-ribose + L-seryl-[protein]. It catalyses the reaction alpha-NAD(+) + H2O = ADP-D-ribose + nicotinamide + H(+). The protein undergoes a dramatic conformational switch from closed to open states upon substrate-binding, which enables specific substrate recognition for the 1''-O-linkage. The glutamate flap (Glu-47) blocks substrate entrance to Mg(2+) in the unliganded closed state. In presence of substrate, Glu-47 is ejected from the active site: this closed-to-open transition significantly widens the substrate-binding channel and precisely positions the scissile 1''-O-linkage for cleavage while securing tightly 2'- and 3'-hydroxyls of ADP-ribose. In terms of biological role, ADP-ribosylhydrolase that preferentially hydrolyzes the scissile alpha-O-linkage attached to the anomeric C1'' position of ADP-ribose and acts on different substrates, such as proteins ADP-ribosylated on serine and threonine, free poly(ADP-ribose) and O-acetyl-ADP-D-ribose. Specifically acts as a serine mono-ADP-ribosylhydrolase by mediating the removal of mono-ADP-ribose attached to serine residues on proteins, thereby playing a key role in DNA damage response. Serine ADP-ribosylation of proteins constitutes the primary form of ADP-ribosylation of proteins in response to DNA damage. Does not hydrolyze ADP-ribosyl-arginine, -cysteine, -diphthamide, or -asparagine bonds. Also able to degrade protein free poly(ADP-ribose), which is synthesized in response to DNA damage: free poly(ADP-ribose) acts as a potent cell death signal and its degradation by ADPRHL2 protects cells from poly(ADP-ribose)-dependent cell death, a process named parthanatos. Also hydrolyzes free poly(ADP-ribose) in mitochondria. Specifically digests O-acetyl-ADP-D-ribose, a product of deacetylation reactions catalyzed by sirtuins. Specifically degrades 1''-O-acetyl-ADP-D-ribose isomer, rather than 2''-O-acetyl-ADP-D-ribose or 3''-O-acetyl-ADP-D-ribose isomers. In Mus musculus (Mouse), this protein is ADP-ribosylhydrolase ARH3 (Adprs).